The sequence spans 402 residues: CCA-adding enzyme (402 aa).

2 residues coordinate ATP: G32 and R35. Residues G32 and R35 each contribute to the CTP site. Mg(2+) is bound by residues D45 and D47. ATP is bound by residues R116, D159, R162, R165, and R168. Residues R116, D159, R162, R165, and R168 each contribute to the CTP site.

This sequence belongs to the tRNA nucleotidyltransferase/poly(A) polymerase family. Bacterial CCA-adding enzyme type 3 subfamily. Homodimer. It depends on Mg(2+) as a cofactor.

It catalyses the reaction a tRNA precursor + 2 CTP + ATP = a tRNA with a 3' CCA end + 3 diphosphate. It carries out the reaction a tRNA with a 3' CCA end + 2 CTP + ATP = a tRNA with a 3' CCACCA end + 3 diphosphate. Catalyzes the addition and repair of the essential 3'-terminal CCA sequence in tRNAs without using a nucleic acid template. Adds these three nucleotides in the order of C, C, and A to the tRNA nucleotide-73, using CTP and ATP as substrates and producing inorganic pyrophosphate. tRNA 3'-terminal CCA addition is required both for tRNA processing and repair. Also involved in tRNA surveillance by mediating tandem CCA addition to generate a CCACCA at the 3' terminus of unstable tRNAs. While stable tRNAs receive only 3'-terminal CCA, unstable tRNAs are marked with CCACCA and rapidly degraded. The sequence is that of CCA-adding enzyme from Streptococcus agalactiae serotype III (strain NEM316).